Here is a 677-residue protein sequence, read N- to C-terminus: DNA ligase (677 aa).

NAD(+) contacts are provided by residues Asp-34–Asp-38, Ser-84–Leu-85, and Glu-118. Catalysis depends on Lys-120, which acts as the N6-AMP-lysine intermediate. NAD(+)-binding residues include Arg-141, Glu-176, Lys-283, and Lys-307. Positions 403, 406, 421, and 427 each coordinate Zn(2+). The BRCT domain maps to Glu-594–Glu-677.

The protein belongs to the NAD-dependent DNA ligase family. LigA subfamily. The cofactor is Mg(2+). Requires Mn(2+) as cofactor.

The enzyme catalyses NAD(+) + (deoxyribonucleotide)n-3'-hydroxyl + 5'-phospho-(deoxyribonucleotide)m = (deoxyribonucleotide)n+m + AMP + beta-nicotinamide D-nucleotide.. DNA ligase that catalyzes the formation of phosphodiester linkages between 5'-phosphoryl and 3'-hydroxyl groups in double-stranded DNA using NAD as a coenzyme and as the energy source for the reaction. It is essential for DNA replication and repair of damaged DNA. The polypeptide is DNA ligase (Anaplasma phagocytophilum (strain HZ)).